The following is a 101-amino-acid chain: Urease subunit beta (101 aa).

It belongs to the urease beta subunit family. As to quaternary structure, heterotrimer of UreA (gamma), UreB (beta) and UreC (alpha) subunits. Three heterotrimers associate to form the active enzyme.

Its subcellular location is the cytoplasm. The enzyme catalyses urea + 2 H2O + H(+) = hydrogencarbonate + 2 NH4(+). The protein operates within nitrogen metabolism; urea degradation; CO(2) and NH(3) from urea (urease route): step 1/1. The sequence is that of Urease subunit beta from Rhizobium rhizogenes (strain K84 / ATCC BAA-868) (Agrobacterium radiobacter).